Reading from the N-terminus, the 491-residue chain is Ketol-acid reductoisomerase (NADP(+)) (491 aa).

The KARI N-terminal Rossmann domain occupies 15 to 208 (AQLGKCRFMG…GGHRAGVLES (194 aa)). Residues 45-48 (CGAQ), Arg68, Arg76, Ser78, and 108-110 (DKQ) contribute to the NADP(+) site. His132 is a catalytic residue. Gly158 is a binding site for NADP(+). KARI C-terminal knotted domains follow at residues 209-344 (SFVA…TAPQ) and 345-484 (YEGK…MTDM). Mg(2+) is bound by residues Asp217, Glu221, Glu389, and Glu393. Residue Ser414 participates in substrate binding.

This sequence belongs to the ketol-acid reductoisomerase family. It depends on Mg(2+) as a cofactor.

The enzyme catalyses (2R)-2,3-dihydroxy-3-methylbutanoate + NADP(+) = (2S)-2-acetolactate + NADPH + H(+). It carries out the reaction (2R,3R)-2,3-dihydroxy-3-methylpentanoate + NADP(+) = (S)-2-ethyl-2-hydroxy-3-oxobutanoate + NADPH + H(+). It participates in amino-acid biosynthesis; L-isoleucine biosynthesis; L-isoleucine from 2-oxobutanoate: step 2/4. It functions in the pathway amino-acid biosynthesis; L-valine biosynthesis; L-valine from pyruvate: step 2/4. Its function is as follows. Involved in the biosynthesis of branched-chain amino acids (BCAA). Catalyzes an alkyl-migration followed by a ketol-acid reduction of (S)-2-acetolactate (S2AL) to yield (R)-2,3-dihydroxy-isovalerate. In the isomerase reaction, S2AL is rearranged via a Mg-dependent methyl migration to produce 3-hydroxy-3-methyl-2-ketobutyrate (HMKB). In the reductase reaction, this 2-ketoacid undergoes a metal-dependent reduction by NADPH to yield (R)-2,3-dihydroxy-isovalerate. This Escherichia coli O157:H7 protein is Ketol-acid reductoisomerase (NADP(+)).